Here is a 950-residue protein sequence, read N- to C-terminus: Oxysterol-binding protein-related protein 1 (950 aa).

An interaction with RAB7A region spans residues 1–237 (MNTEAEQQLL…NKVVHKALKR (237 aa)). 3 ANK repeats span residues 47–76 (LGWT…KVNM), 80–109 (MGDT…DTTV), and 175–204 (LGNT…DPSL). Residues 235–334 (LKRFEGPLWK…WLEAIEEHSA (100 aa)) enclose the PH domain. A coiled-coil region spans residues 430–463 (NFKLEQEQEKNKILSEALETLATEHHELERSLVE). The FFAT motif lies at 469-483 (SILSEDEFYDALSGS). 2 disordered regions span residues 795–821 (KKNT…VPDS) and 881–913 (MENG…SEED). The stretch at 877–913 (DIRAMENGEIDQASEEKKRLEEKQRAARKNRSKSEED) forms a coiled coil. The span at 890 to 901 (SEEKKRLEEKQR) shows a compositional bias: basic and acidic residues.

The protein belongs to the OSBP family. As to quaternary structure, interacts (via FFAT motif) with VAPA. Interacts (via FFAT motif) with VAPB. Interacts with the GTP-bound form of RAB7A. Interacts with OAS1B. Interacts (via FFAT motif) with MOSPD2 (via MSP domain). In terms of tissue distribution, detected in prostate and liver.

Its subcellular location is the late endosome. Binds phospholipids; exhibits strong binding to phosphatidic acid and weak binding to phosphatidylinositol 3-phosphate. Stabilizes GTP-bound RAB7A on late endosomes/lysosomes and alters functional properties of late endocytic compartments via its interaction with RAB7A. Binds 25-hydroxycholesterol and cholesterol. In Rattus norvegicus (Rat), this protein is Oxysterol-binding protein-related protein 1.